Reading from the N-terminus, the 352-residue chain is Protein SIS1 (352 aa).

One can recognise a J domain in the interval 4-70; sequence ETKLYDLLGV…REIYDQYGLE (67 aa). Ser-275 is modified (phosphoserine). The tract at residues 300–325 is disordered; it reads VQPVQPSQTSTYPGQGMPTPKNPSQR. The span at 301-312 shows a compositional bias: polar residues; it reads QPVQPSQTSTYP.

Interacts with polyadenylate-binding protein PAB1.

The protein localises to the cytoplasm. The protein resides in the nucleus. Its function is as follows. Required for nuclear migration during mitosis. It is required for the normal initiation of translation. Might mediate the dissociation of a specific protein complex of the translation machinery. Essential for viability. The polypeptide is Protein SIS1 (SIS1) (Saccharomyces cerevisiae (strain ATCC 204508 / S288c) (Baker's yeast)).